Reading from the N-terminus, the 932-residue chain is Protein translocase subunit SecA (932 aa).

ATP contacts are provided by residues Q87, 105–109 (GEGKT), and D515. Positions 916, 918, 927, and 928 each coordinate Zn(2+).

The protein belongs to the SecA family. Monomer and homodimer. Part of the essential Sec protein translocation apparatus which comprises SecA, SecYEG and auxiliary proteins SecDF-YajC and YidC. The cofactor is Zn(2+).

It localises to the cell inner membrane. Its subcellular location is the cytoplasm. The enzyme catalyses ATP + H2O + cellular proteinSide 1 = ADP + phosphate + cellular proteinSide 2.. Its function is as follows. Part of the Sec protein translocase complex. Interacts with the SecYEG preprotein conducting channel. Has a central role in coupling the hydrolysis of ATP to the transfer of proteins into and across the cell membrane, serving both as a receptor for the preprotein-SecB complex and as an ATP-driven molecular motor driving the stepwise translocation of polypeptide chains across the membrane. The protein is Protein translocase subunit SecA of Burkholderia orbicola (strain AU 1054).